We begin with the raw amino-acid sequence, 426 residues long: mRNA cap guanine-N(7) methyltransferase (426 aa).

An mRNA cap 0 methyltransferase domain is found at 138–421 (SPIIKLRNFN…FYTTFAFRKV (284 aa)). 147–148 (NN) contacts mRNA. S-adenosyl-L-methionine-binding residues include lysine 151, alanine 169, aspartate 191, aspartate 220, glutamine 246, and tyrosine 251.

The protein belongs to the class I-like SAM-binding methyltransferase superfamily. mRNA cap 0 methyltransferase family.

The protein localises to the nucleus. The catalysed reaction is a 5'-end (5'-triphosphoguanosine)-ribonucleoside in mRNA + S-adenosyl-L-methionine = a 5'-end (N(7)-methyl 5'-triphosphoguanosine)-ribonucleoside in mRNA + S-adenosyl-L-homocysteine. Its function is as follows. Responsible for methylating the 5'-cap structure of mRNAs. In Kluyveromyces lactis (strain ATCC 8585 / CBS 2359 / DSM 70799 / NBRC 1267 / NRRL Y-1140 / WM37) (Yeast), this protein is mRNA cap guanine-N(7) methyltransferase (ABD1).